A 257-amino-acid polypeptide reads, in one-letter code: Pimeloyl-[acyl-carrier protein] methyl ester esterase (257 aa).

The region spanning 15-241 is the AB hydrolase-1 domain; the sequence is HLVLLHGWGL…KAAHAPFVSH (227 aa). Substrate contacts are provided by residues Trp-22, 82-83, and 143-147; these read SL and FLALQ. The active-site Nucleophile is the Ser-82. Residues Asp-207 and His-235 contribute to the active site. Residue His-235 coordinates substrate.

It belongs to the AB hydrolase superfamily. Carboxylesterase BioH family. As to quaternary structure, monomer.

It localises to the cytoplasm. It catalyses the reaction 6-carboxyhexanoyl-[ACP] methyl ester + H2O = 6-carboxyhexanoyl-[ACP] + methanol + H(+). It functions in the pathway cofactor biosynthesis; biotin biosynthesis. In terms of biological role, the physiological role of BioH is to remove the methyl group introduced by BioC when the pimeloyl moiety is complete. It allows to synthesize pimeloyl-ACP via the fatty acid synthetic pathway through the hydrolysis of the ester bonds of pimeloyl-ACP esters. The polypeptide is Pimeloyl-[acyl-carrier protein] methyl ester esterase (Klebsiella pneumoniae (strain 342)).